Consider the following 248-residue polypeptide: 3-deoxy-manno-octulosonate cytidylyltransferase (248 aa).

It belongs to the KdsB family.

It is found in the cytoplasm. The enzyme catalyses 3-deoxy-alpha-D-manno-oct-2-ulosonate + CTP = CMP-3-deoxy-beta-D-manno-octulosonate + diphosphate. The protein operates within nucleotide-sugar biosynthesis; CMP-3-deoxy-D-manno-octulosonate biosynthesis; CMP-3-deoxy-D-manno-octulosonate from 3-deoxy-D-manno-octulosonate and CTP: step 1/1. Its pathway is bacterial outer membrane biogenesis; lipopolysaccharide biosynthesis. Activates KDO (a required 8-carbon sugar) for incorporation into bacterial lipopolysaccharide in Gram-negative bacteria. This Escherichia coli O127:H6 (strain E2348/69 / EPEC) protein is 3-deoxy-manno-octulosonate cytidylyltransferase.